The following is a 372-amino-acid chain: Protein Wnt-1 (372 aa).

Positions 1–29 (MLKSTQVILIFILLISIVESLSWLALGLA) are cleaved as a signal peptide. Disulfide bonds link cysteine 77–cysteine 88, cysteine 130–cysteine 138, and cysteine 140–cysteine 158. Residue asparagine 87 is glycosylated (N-linked (GlcNAc...) asparagine). The N-linked (GlcNAc...) asparagine glycan is linked to asparagine 187. Cystine bridges form between cysteine 225-cysteine 239, cysteine 227-cysteine 234, cysteine 301-cysteine 332, cysteine 317-cysteine 327, cysteine 331-cysteine 371, cysteine 347-cysteine 362, cysteine 349-cysteine 359, and cysteine 354-cysteine 355. Residue serine 231 is the site of O-palmitoleoyl serine; by mom-1 attachment.

Belongs to the Wnt family. In terms of processing, palmitoleoylation is required for efficient binding to frizzled receptors. Depalmitoleoylation leads to Wnt signaling pathway inhibition. As to expression, expressed in intestine, some head neurons and ventral nerve cord and pharyngeal neurons. Expressed in the tail and weakly expressed in the vulva and body wall muscles. Expressed highly in posterior dorsal and ventral muscle cells.

It is found in the secreted. It localises to the extracellular space. The protein resides in the extracellular matrix. Its subcellular location is the cytoplasm. The protein localises to the cell membrane. Its function is as follows. Ligand for members of the frizzled family of seven transmembrane receptors. Probable developmental protein. May be a signaling molecule which affects the development of discrete regions of tissues. Is likely to signal over only few cell diameters. Binds receptor tyrosine kinase cam-1. Together with Wnt ligand cwn-2, regulates the migration of CAN, ALM, BDU and HSN neurons during embryogenesis, the migration of QL and QR neuroblast descendants during larval development, and polarity of ALM neurons. Also acts with the Wnt ligand egl-20 to direct HSN neuron migration. Acts through the Wnt receptor cfz-2 to direct ALM migration. Also plays a role in axon growth and guidance in HSN and male CP neurons. In addition, together with Wnt ligand cwn-2, negatively regulates developmental neurite pruning of AIM neurons probably by acting as a ligand for receptor tyrosine kinase cam-1. Probably by activating the Wnt/Frizzled pathway, may regulate vulva development. May act redundantly with other Wnt ligands such as cwn-2 and mom-2 to control seam cell polarity. This chain is Protein Wnt-1 (cwn-1), found in Caenorhabditis elegans.